We begin with the raw amino-acid sequence, 520 residues long: Hydroxymethylglutaryl-CoA synthase, cytoplasmic (520 aa).

Phosphoserine is present on serine 4. Position 44 (alanine 44) interacts with (3S)-3-hydroxy-3-methylglutaryl-CoA. 44-46 contributes to the CoA binding site; the sequence is AGK. Lysine 46 carries the N6-acetyllysine modification. Catalysis depends on glutamate 95, which acts as the Proton donor/acceptor. Residues cysteine 129, asparagine 167, threonine 171, serine 221, and histidine 264 each contribute to the (3S)-3-hydroxy-3-methylglutaryl-CoA site. The active-site Acyl-thioester intermediate is cysteine 129. Asparagine 167 is a binding site for CoA. Serine 221 serves as a coordination point for CoA. Histidine 264 serves as the catalytic Proton donor/acceptor. CoA-binding residues include lysine 269 and lysine 273. The (3S)-3-hydroxy-3-methylglutaryl-CoA site is built by lysine 273, asparagine 343, and serine 377. Position 273 is an N6-acetyllysine (lysine 273). Threonine 476 carries the phosphothreonine modification. The tract at residues 492–520 is disordered; that stretch reads HIPSPAKKVPRLPATAAEPEAAVISNGEH. Residues serine 495 and serine 516 each carry the phosphoserine modification.

This sequence belongs to the thiolase-like superfamily. HMG-CoA synthase family. As to quaternary structure, homodimer.

It is found in the cytoplasm. The enzyme catalyses acetoacetyl-CoA + acetyl-CoA + H2O = (3S)-3-hydroxy-3-methylglutaryl-CoA + CoA + H(+). It participates in metabolic intermediate biosynthesis; (R)-mevalonate biosynthesis; (R)-mevalonate from acetyl-CoA: step 2/3. Its function is as follows. Catalyzes the condensation of acetyl-CoA with acetoacetyl-CoA to form HMG-CoA, which is converted by HMG-CoA reductase (HMGCR) into mevalonate, a precursor for cholesterol synthesis. This chain is Hydroxymethylglutaryl-CoA synthase, cytoplasmic, found in Pongo abelii (Sumatran orangutan).